A 396-amino-acid chain; its full sequence is Elongation factor Tu 2 (396 aa).

A tr-type G domain is found at 10 to 206; it reads KPHVNVGTIG…AIDSYIPEPE (197 aa). The tract at residues 19 to 26 is G1; the sequence is GHIDHGKT. A GTP-binding site is contributed by 19–26; that stretch reads GHIDHGKT. T26 is a binding site for Mg(2+). Residues 60–64 are G2; sequence GITIA. The tract at residues 81 to 84 is G3; sequence DCPG. GTP is bound by residues 81 to 85 and 136 to 139; these read DCPGH and NKCD. Residues 136 to 139 form a G4 region; it reads NKCD. The segment at 174 to 176 is G5; the sequence is SAL.

The protein belongs to the TRAFAC class translation factor GTPase superfamily. Classic translation factor GTPase family. EF-Tu/EF-1A subfamily. As to quaternary structure, monomer.

The protein resides in the cytoplasm. The catalysed reaction is GTP + H2O = GDP + phosphate + H(+). Its function is as follows. GTP hydrolase that promotes the GTP-dependent binding of aminoacyl-tRNA to the A-site of ribosomes during protein biosynthesis. The chain is Elongation factor Tu 2 from Desulfotalea psychrophila (strain LSv54 / DSM 12343).